The chain runs to 122 residues: Large ribosomal subunit protein uL14 (122 aa).

The protein belongs to the universal ribosomal protein uL14 family. Part of the 50S ribosomal subunit. Forms a cluster with proteins L3 and L19. In the 70S ribosome, L14 and L19 interact and together make contacts with the 16S rRNA in bridges B5 and B8.

In terms of biological role, binds to 23S rRNA. Forms part of two intersubunit bridges in the 70S ribosome. The polypeptide is Large ribosomal subunit protein uL14 (Corynebacterium glutamicum (strain R)).